Here is a 108-residue protein sequence, read N- to C-terminus: UPF0235 protein MM_0822 (108 aa).

This sequence belongs to the UPF0235 family.

This is UPF0235 protein MM_0822 from Methanosarcina mazei (strain ATCC BAA-159 / DSM 3647 / Goe1 / Go1 / JCM 11833 / OCM 88) (Methanosarcina frisia).